Consider the following 632-residue polypeptide: Polyadenylate-binding protein, cytoplasmic and nuclear (632 aa).

Polar residues predominate over residues 1-11; sequence MSAADANQLQE. The tract at residues 1–43 is disordered; the sequence is MSAADANQLQESLEKLNLDSAPAAAEEEAVAAESAPAGEEGAD. Over residues 31 to 43 the composition is skewed to low complexity; sequence AAESAPAGEEGAD. RRM domains follow at residues 52–130, 140–217, 233–310, and 336–413; these read ASLY…WSQR, GNIF…KHIS, TNIY…RAQK, and VNLF…LAQR. A PABC domain is found at 534-615; the sequence is QQRDLAAIIA…ALTAFEEYKN (82 aa).

The protein belongs to the polyadenylate-binding protein type-1 family.

The protein localises to the cytoplasm. The protein resides in the nucleus. Binds the poly(A) tail of mRNA. Appears to be an important mediator of the multiple roles of the poly(A) tail in mRNA biogenesis, stability and translation. In the nucleus, involved in both mRNA cleavage and polyadenylation. Is also required for efficient mRNA export to the cytoplasm. Acts in concert with a poly(A)-specific nuclease (PAN) to affect poly(A) tail shortening, which may occur concomitantly with either nucleocytoplasmic mRNA transport or translational initiation. In the cytoplasm, stimulates translation initiation and regulates mRNA decay through translation termination-coupled poly(A) shortening, probably mediated by PAN. The polypeptide is Polyadenylate-binding protein, cytoplasmic and nuclear (PAB1) (Scheffersomyces stipitis (strain ATCC 58785 / CBS 6054 / NBRC 10063 / NRRL Y-11545) (Yeast)).